The sequence spans 382 residues: Pregnancy-associated glycoprotein 1 (382 aa).

The first 15 residues, 1-15 (MKWLVLLGLVAFSEC), serve as a signal peptide directing secretion. Residues 16 to 53 (IVKIPLRRVKTMRNTLSGKKMLNSFLKEHAYRLSQISF) constitute a propeptide, activation peptide. N-linked (GlcNAc...) asparagine glycosylation is found at asparagine 57 and asparagine 74. Positions 71–379 (YVGNITIGTP…DRGNDRIGLA (309 aa)) constitute a Peptidase A1 domain. An intrachain disulfide couples cysteine 102 to cysteine 110. Residue asparagine 128 is glycosylated (N-linked (GlcNAc...) asparagine). Intrachain disulfides connect cysteine 263–cysteine 267 and cysteine 305–cysteine 339.

This sequence belongs to the peptidase A1 family. In terms of tissue distribution, trophoblast and placental tissue. Produced specifically in the invasive binucleate cells of the placenta.

It is found in the secreted. It localises to the extracellular space. Its function is as follows. Has no proteolytic activity. The chain is Pregnancy-associated glycoprotein 1 from Ovis aries (Sheep).